A 102-amino-acid polypeptide reads, in one-letter code: Large ribosomal subunit protein bL21 (102 aa).

It belongs to the bacterial ribosomal protein bL21 family. Part of the 50S ribosomal subunit. Contacts protein L20.

In terms of biological role, this protein binds to 23S rRNA in the presence of protein L20. The protein is Large ribosomal subunit protein bL21 of Agathobacter rectalis (strain ATCC 33656 / DSM 3377 / JCM 17463 / KCTC 5835 / VPI 0990) (Eubacterium rectale).